The sequence spans 105 residues: UPF0045 protein ECM15 (105 aa).

It belongs to the UPF0045 family.

This chain is UPF0045 protein ECM15 (ECM15), found in Eremothecium gossypii (strain ATCC 10895 / CBS 109.51 / FGSC 9923 / NRRL Y-1056) (Yeast).